A 297-amino-acid chain; its full sequence is tRNA dimethylallyltransferase (297 aa).

9 to 16 provides a ligand contact to ATP; the sequence is GPTASGKS. 11–16 contacts substrate; it reads TASGKS. Interaction with substrate tRNA stretches follow at residues 34–37 and 155–159; these read DSMQ and QRVIR.

This sequence belongs to the IPP transferase family. As to quaternary structure, monomer. Mg(2+) serves as cofactor.

It carries out the reaction adenosine(37) in tRNA + dimethylallyl diphosphate = N(6)-dimethylallyladenosine(37) in tRNA + diphosphate. Functionally, catalyzes the transfer of a dimethylallyl group onto the adenine at position 37 in tRNAs that read codons beginning with uridine, leading to the formation of N6-(dimethylallyl)adenosine (i(6)A). The sequence is that of tRNA dimethylallyltransferase from Leuconostoc mesenteroides subsp. mesenteroides (strain ATCC 8293 / DSM 20343 / BCRC 11652 / CCM 1803 / JCM 6124 / NCDO 523 / NBRC 100496 / NCIMB 8023 / NCTC 12954 / NRRL B-1118 / 37Y).